The sequence spans 166 residues: MNLDKDLERIALQEARLQFRSFDAHSAWVLGSRLRALAEQRNLAITIEIQVNGNPLFLSAMPGTAPNNLDWARRKKNVVTLMRRSSYAVGLQLQKDGTSLIEQAGLELRDYAAHGGCFPILLRGTGCIGTVAVSGLPQRDDHELIVEALAGMLEERLEELALDNLA.

Belongs to the UPF0303 family.

The sequence is that of UPF0303 protein Avin_29320 from Azotobacter vinelandii (strain DJ / ATCC BAA-1303).